Reading from the N-terminus, the 207-residue chain is Ribosomal RNA large subunit methyltransferase E (207 aa).

Glycine 60, tryptophan 62, aspartate 80, aspartate 96, and aspartate 121 together coordinate S-adenosyl-L-methionine. Lysine 161 functions as the Proton acceptor in the catalytic mechanism.

The protein belongs to the class I-like SAM-binding methyltransferase superfamily. RNA methyltransferase RlmE family.

It localises to the cytoplasm. The catalysed reaction is uridine(2552) in 23S rRNA + S-adenosyl-L-methionine = 2'-O-methyluridine(2552) in 23S rRNA + S-adenosyl-L-homocysteine + H(+). Its function is as follows. Specifically methylates the uridine in position 2552 of 23S rRNA at the 2'-O position of the ribose in the fully assembled 50S ribosomal subunit. This Ectopseudomonas mendocina (strain ymp) (Pseudomonas mendocina) protein is Ribosomal RNA large subunit methyltransferase E.